Here is a 214-residue protein sequence, read N- to C-terminus: Pyridoxine/pyridoxamine 5'-phosphate oxidase (214 aa).

Residues 7 to 10 (REEY) and Lys-65 each bind substrate. FMN contacts are provided by residues 60–65 (RTVLLK), 75–76 (FT), Arg-81, Lys-82, and Gln-104. Positions 122, 126, and 130 each coordinate substrate. FMN contacts are provided by residues 139–140 (QS) and Trp-184. 190-192 (RLH) contributes to the substrate binding site. Arg-194 serves as a coordination point for FMN.

It belongs to the pyridoxamine 5'-phosphate oxidase family. As to quaternary structure, homodimer. FMN serves as cofactor.

The enzyme catalyses pyridoxamine 5'-phosphate + O2 + H2O = pyridoxal 5'-phosphate + H2O2 + NH4(+). The catalysed reaction is pyridoxine 5'-phosphate + O2 = pyridoxal 5'-phosphate + H2O2. Its pathway is cofactor metabolism; pyridoxal 5'-phosphate salvage; pyridoxal 5'-phosphate from pyridoxamine 5'-phosphate: step 1/1. It functions in the pathway cofactor metabolism; pyridoxal 5'-phosphate salvage; pyridoxal 5'-phosphate from pyridoxine 5'-phosphate: step 1/1. Functionally, catalyzes the oxidation of either pyridoxine 5'-phosphate (PNP) or pyridoxamine 5'-phosphate (PMP) into pyridoxal 5'-phosphate (PLP). The sequence is that of Pyridoxine/pyridoxamine 5'-phosphate oxidase from Crocosphaera subtropica (strain ATCC 51142 / BH68) (Cyanothece sp. (strain ATCC 51142)).